The sequence spans 466 residues: UDP-N-acetylmuramate--L-alanine ligase (466 aa).

114–120 (GTHGKTT) contributes to the ATP binding site.

It belongs to the MurCDEF family.

Its subcellular location is the cytoplasm. It carries out the reaction UDP-N-acetyl-alpha-D-muramate + L-alanine + ATP = UDP-N-acetyl-alpha-D-muramoyl-L-alanine + ADP + phosphate + H(+). It participates in cell wall biogenesis; peptidoglycan biosynthesis. Cell wall formation. This is UDP-N-acetylmuramate--L-alanine ligase from Chlorobium phaeobacteroides (strain DSM 266 / SMG 266 / 2430).